Reading from the N-terminus, the 156-residue chain is Transcription elongation factor GreA (156 aa).

Positions 8 to 75 form a coiled coil; it reads LTKEGYEKLK…ELENMLSKAE (68 aa).

This sequence belongs to the GreA/GreB family.

Necessary for efficient RNA polymerase transcription elongation past template-encoded arresting sites. The arresting sites in DNA have the property of trapping a certain fraction of elongating RNA polymerases that pass through, resulting in locked ternary complexes. Cleavage of the nascent transcript by cleavage factors such as GreA or GreB allows the resumption of elongation from the new 3'terminus. GreA releases sequences of 2 to 3 nucleotides. In Thermosipho melanesiensis (strain DSM 12029 / CIP 104789 / BI429), this protein is Transcription elongation factor GreA.